Consider the following 319-residue polypeptide: Lipoyl synthase (319 aa).

A disordered region spans residues 1–28 (MVVLVDTVSSTPVRPRHPEKAARPDALS). A compositionally biased stretch (basic and acidic residues) spans 16 to 28 (RHPEKAARPDALS). Residues Cys61, Cys66, Cys72, Cys87, Cys91, Cys94, and Ser300 each coordinate [4Fe-4S] cluster. The Radical SAM core domain occupies 73–289 (WDKKHATFMI…AKTAYAKGFL (217 aa)).

Belongs to the radical SAM superfamily. Lipoyl synthase family. The cofactor is [4Fe-4S] cluster.

The protein resides in the cytoplasm. It carries out the reaction [[Fe-S] cluster scaffold protein carrying a second [4Fe-4S](2+) cluster] + N(6)-octanoyl-L-lysyl-[protein] + 2 oxidized [2Fe-2S]-[ferredoxin] + 2 S-adenosyl-L-methionine + 4 H(+) = [[Fe-S] cluster scaffold protein] + N(6)-[(R)-dihydrolipoyl]-L-lysyl-[protein] + 4 Fe(3+) + 2 hydrogen sulfide + 2 5'-deoxyadenosine + 2 L-methionine + 2 reduced [2Fe-2S]-[ferredoxin]. Its pathway is protein modification; protein lipoylation via endogenous pathway; protein N(6)-(lipoyl)lysine from octanoyl-[acyl-carrier-protein]: step 2/2. In terms of biological role, catalyzes the radical-mediated insertion of two sulfur atoms into the C-6 and C-8 positions of the octanoyl moiety bound to the lipoyl domains of lipoate-dependent enzymes, thereby converting the octanoylated domains into lipoylated derivatives. This is Lipoyl synthase from Rhodopseudomonas palustris (strain HaA2).